Consider the following 115-residue polypeptide: MTYSKIACSLGKRGIARAPNQASSFFLLLFLFAKFSQQLSPSPCLASSGVAKSRGPASTDRPCSASMAEAVLDLLADCSPTASVPVAANAPSCAGVAASAGAQGASPSSQVSPQA.

Positions 1–38 (MTYSKIACSLGKRGIARAPNQASSFFLLLFLFAKFSQQ) are cleaved as a signal peptide. The interval 42–62 (SPCLASSGVAKSRGPASTDRP) is disordered.

The protein operates within secondary metabolite biosynthesis. In terms of biological role, part of the gene cluster that mediates the biosynthesis of the glycolipid biosurfactant ustilagic acid (UA). UA is a secreted cellobiose glycolipid that is toxic for many microorganisms and confers biocontrol activity to U.maydis. UA consists of 15,16-dihydroxypalmitic or 2,15,16-trihydroxypalmitic acid, which is O-glycosidically linked to cellobiose at its terminal hydroxyl group. In addition, the cellobiose moiety is acetylated and acylated with a short-chain hydroxy fatty acid. UA biosynthesis starts with omega-hydroxylation of palmitic acid catalyzed by the cytochrome P450 monooxygenase cyp1. Terminal hydroxylation of palmitic acid precedes subterminal hydroxylation catalyzed by the cytochrome P450 monooxygenase cyp2. Sequential glucosylation of the hydroxy fatty acid is probably catalyzed by the glycosyltransferase ugt1. The cellobiose lipid is further decorated by acetylation of the proximal glucose residue and by acylation with a short-chain beta-hydroxy fatty acid at the distal glucose residue. The acyltransferase uat1 may be a good candidate for catalyzing either acetylation or acylation of the cellobiose lipid. The fatty acid synthase fas2 may be involved in synthesis of the carbon backbone of the short-chain beta-hydroxy fatty acid esterified to the cellobiose disaccharide. The secreted UA consists of a mixture of both alpha-hydroxylated and non-hydroxylated glycolipids; therefore, alpha-hydroxylation of the long-chain fatty, catalyzed by the fatty acid hydroxylase ahd1, occurs late in UA biosynthesis and may be the last step before secretion. The protein is Ustilagic acid biosynthesis cluster protein orf3 of Mycosarcoma maydis (Corn smut fungus).